Consider the following 374-residue polypeptide: Anhydro-N-acetylmuramic acid kinase (374 aa).

12–19 (GTSLDGID) lines the ATP pocket.

It belongs to the anhydro-N-acetylmuramic acid kinase family.

It carries out the reaction 1,6-anhydro-N-acetyl-beta-muramate + ATP + H2O = N-acetyl-D-muramate 6-phosphate + ADP + H(+). It participates in amino-sugar metabolism; 1,6-anhydro-N-acetylmuramate degradation. It functions in the pathway cell wall biogenesis; peptidoglycan recycling. Functionally, catalyzes the specific phosphorylation of 1,6-anhydro-N-acetylmuramic acid (anhMurNAc) with the simultaneous cleavage of the 1,6-anhydro ring, generating MurNAc-6-P. Is required for the utilization of anhMurNAc either imported from the medium or derived from its own cell wall murein, and thus plays a role in cell wall recycling. This Klebsiella pneumoniae subsp. pneumoniae (strain ATCC 700721 / MGH 78578) protein is Anhydro-N-acetylmuramic acid kinase.